The following is an 83-amino-acid chain: MSGNTGERSFADIITSIRYWVIHSITIPSLFIAGWLFVSTGLAYDVFGSPRPNEYFTESRQEVPLVTGRFDPLEQLDEFTRSF.

The helical transmembrane segment at 21-35 (VIHSITIPSLFIAGW) threads the bilayer. H23 contacts heme.

It belongs to the PsbE/PsbF family. As to quaternary structure, heterodimer of an alpha subunit and a beta subunit. PSII is composed of 1 copy each of membrane proteins PsbA, PsbB, PsbC, PsbD, PsbE, PsbF, PsbH, PsbI, PsbJ, PsbK, PsbL, PsbM, PsbT, PsbX, PsbY, PsbZ, Psb30/Ycf12, at least 3 peripheral proteins of the oxygen-evolving complex and a large number of cofactors. It forms dimeric complexes. The cofactor is heme b.

The protein resides in the plastid. It is found in the chloroplast thylakoid membrane. In terms of biological role, this b-type cytochrome is tightly associated with the reaction center of photosystem II (PSII). PSII is a light-driven water:plastoquinone oxidoreductase that uses light energy to abstract electrons from H(2)O, generating O(2) and a proton gradient subsequently used for ATP formation. It consists of a core antenna complex that captures photons, and an electron transfer chain that converts photonic excitation into a charge separation. The chain is Cytochrome b559 subunit alpha from Pinus koraiensis (Korean pine).